The chain runs to 600 residues: Integrator complex subunit 11 (600 aa).

Residues His-68, His-70, Asp-72, His-73, His-157, and Asp-178 each contribute to the Zn(2+) site. The HXHXDH motif motif lies at His-68–His-73. Glu-203 is a catalytic residue. Position 414 (His-414) interacts with Zn(2+). A Nuclear localization signal motif is present at residues Leu-469 to Met-479.

Belongs to the metallo-beta-lactamase superfamily. RNA-metabolizing metallo-beta-lactamase-like family. INTS11 subfamily. In terms of assembly, component of the Integrator complex, composed of core subunits INTS1, INTS2, INTS3, INTS4, INTS5, INTS6, INTS7, INTS8, INTS9/RC74, INTS10, INTS11/CPSF3L, INTS12, INTS13, INTS14 and INTS15. The core complex associates with protein phosphatase 2A subunits PPP2CA and PPP2R1A, to form the Integrator-PP2A (INTAC) complex. INTS11 is part of the RNA endonuclease subcomplex, composed of INTS4, INTS9, INTS11 and inositol hexakisphosphate (InsP6). It depends on Zn(2+) as a cofactor.

Its subcellular location is the nucleus. It is found in the cytoplasm. Functionally, RNA endonuclease component of the integrator complex, a multiprotein complex that terminates RNA polymerase II (Pol II) transcription in the promoter-proximal region of genes. The integrator complex provides a quality checkpoint during transcription elongation by driving premature transcription termination of transcripts that are unfavorably configured for transcriptional elongation: the complex terminates transcription by (1) catalyzing dephosphorylation of the C-terminal domain (CTD) of Pol II subunit POLR2A/RPB1 and SUPT5H/SPT5, (2) degrading the exiting nascent RNA transcript via endonuclease activity and (3) promoting the release of Pol II from bound DNA. The integrator complex is also involved in terminating the synthesis of non-coding Pol II transcripts, such as enhancer RNAs (eRNAs), small nuclear RNAs (snRNAs), telomerase RNAs and long non-coding RNAs (lncRNAs). Within the integrator complex, INTS11 constitutes the RNA endonuclease subunit that degrades exiting nascent RNA transcripts. This chain is Integrator complex subunit 11 (INTS11), found in Gallus gallus (Chicken).